The following is a 98-amino-acid chain: Small ribosomal subunit protein bS18 (98 aa).

The protein belongs to the bacterial ribosomal protein bS18 family. In terms of assembly, part of the 30S ribosomal subunit. Forms a tight heterodimer with protein bS6.

Functionally, binds as a heterodimer with protein bS6 to the central domain of the 16S rRNA, where it helps stabilize the platform of the 30S subunit. The sequence is that of Small ribosomal subunit protein bS18 from Flavobacterium psychrophilum (strain ATCC 49511 / DSM 21280 / CIP 103535 / JIP02/86).